We begin with the raw amino-acid sequence, 298 residues long: HTH-type transcriptional regulator CzcR (298 aa).

An HTH lysR-type domain is found at 11–68; sequence MELRDLQIFQSVADQGSVSSAAKELNYVQSNVTARIKQLENELKTPLFYRHKRGMTLT. Residues 28–47 constitute a DNA-binding region (H-T-H motif); the sequence is VSSAAKELNYVQSNVTARIK.

Belongs to the LysR transcriptional regulatory family.

This Bacillus thuringiensis (strain Al Hakam) protein is HTH-type transcriptional regulator CzcR (czcR).